The following is a 297-amino-acid chain: Cyclin-dependent kinase 1 (297 aa).

Met1 bears the N-acetylmethionine mark. At Tyr4 the chain carries Phosphotyrosine; by PKR. Residues 4 to 287 form the Protein kinase domain; that stretch reads YIKIEKIGEG…GKMALKHPYF (284 aa). N6-acetyllysine; alternate is present on residues Lys6 and Lys9. Residues Lys6 and Lys9 each participate in a glycyl lysine isopeptide (Lys-Gly) (interchain with G-Cter in SUMO2); alternate cross-link. 10 to 18 provides a ligand contact to ATP; it reads IGEGTYGVV. Thr14 bears the Phosphothreonine; by PKMYT1 mark. Tyr15 is modified (phosphotyrosine; by PKMYT1, WEE1, WEE2 and PKC/PRKCD). Tyr15 carries the phosphotyrosine; by WEE1 and WEE2 modification. At Tyr19 the chain carries Phosphotyrosine. Lys20 is covalently cross-linked (Glycyl lysine isopeptide (Lys-Gly) (interchain with G-Cter in SUMO2)). Lys33 serves as a coordination point for ATP. Ser39 carries the post-translational modification Phosphoserine. The residue at position 77 (Tyr77) is a Phosphotyrosine. The active-site Proton acceptor is Asp128. Residue Lys139 forms a Glycyl lysine isopeptide (Lys-Gly) (interchain with G-Cter in SUMO2) linkage. At Thr141 the chain carries Phosphothreonine. A Phosphothreonine; by CAK modification is found at Thr161. A Phosphoserine modification is found at Ser178. Position 222 is a phosphothreonine (Thr222). Lys245 carries the N6-succinyllysine modification. Phosphoserine is present on Ser248.

The protein belongs to the protein kinase superfamily. CMGC Ser/Thr protein kinase family. CDC2/CDKX subfamily. Forms a stable but non-covalent complex with a regulatory subunit and with a cyclin. Interacts with cyclins-B (CCNB1, CCNB2 and CCNB3) to form a serine/threonine kinase holoenzyme complex also known as maturation promoting factor (MPF). The cyclin subunit imparts substrate specificity to the complex. Can also form CDK1-cylin-D and CDK1-cyclin-E complexes that phosphorylate RB1 in vitro. Binds to RB1 and other transcription factors such as FOXO1 and RUNX2. Promotes G2-M transition when in complex with a cyclin-B. Interacts with DLGAP5. Binds to the CDK inhibitors CDKN1A/p21 and CDKN1B/p27. Isoform 2 is unable to complex with cyclin-B1 and also fails to bind to CDKN1A/p21. Interacts with catalytically active CCNB1 and RALBP1 during mitosis to form an endocytotic complex during interphase. Associates with cyclins-A and B1 during S-phase in regenerating hepatocytes. Interacts with FANCC. Interacts with CEP63; this interaction recruits CDK1 to centrosomes. Interacts with CENPA. Interacts with NR1D1. Interacts with proteasome subunit PSMA8; to participate in meiosis progression during spermatogenesis. Post-translationally, phosphorylation at Thr-161 by CAK/CDK7 activates kinase activity. Phosphorylation at Thr-14 and Tyr-15 by PKMYT1 prevents nuclear translocation. Phosphorylation at Tyr-15 by WEE1 and WEE2 inhibits the protein kinase activity and acts as a negative regulator of entry into mitosis (G2 to M transition). Phosphorylation by PKMYT1 and WEE1 takes place during mitosis to keep CDK1-cyclin-B complexes inactive until the end of G2. By the end of G2, PKMYT1 and WEE1 are inactivated, but CDC25A and CDC25B are activated. Dephosphorylation by active CDC25A and CDC25B at Thr-14 and Tyr-15, leads to CDK1 activation at the G2-M transition. Phosphorylation at Tyr-15 by WEE2 during oogenesis is required to maintain meiotic arrest in oocytes during the germinal vesicle (GV) stage, a long period of quiescence at dictyate prophase I, leading to prevent meiotic reentry. Phosphorylation by WEE2 is also required for metaphase II exit during egg activation to ensure exit from meiosis in oocytes and promote pronuclear formation. Phosphorylated at Tyr-4 by PKR/EIF2AK2 upon genotoxic stress. This phosphorylation triggers CDK1 polyubiquitination and subsequent proteolysis, thus leading to G2 arrest. In response to UV irradiation, phosphorylation at Tyr-15 by PRKCD activates the G2/M DNA damage checkpoint. In terms of processing, polyubiquitinated upon genotoxic stress.

The protein localises to the nucleus. It localises to the cytoplasm. It is found in the mitochondrion. The protein resides in the cytoskeleton. Its subcellular location is the microtubule organizing center. The protein localises to the centrosome. It localises to the spindle. The enzyme catalyses L-seryl-[protein] + ATP = O-phospho-L-seryl-[protein] + ADP + H(+). It catalyses the reaction L-threonyl-[protein] + ATP = O-phospho-L-threonyl-[protein] + ADP + H(+). The catalysed reaction is [DNA-directed RNA polymerase] + ATP = phospho-[DNA-directed RNA polymerase] + ADP + H(+). With respect to regulation, phosphorylation at Thr-14 or Tyr-15 inactivates the enzyme, while phosphorylation at Thr-161 activates it. Activated through a multistep process; binding to cyclin-B is required for relocation of cyclin-kinase complexes to the nucleus, activated by CAK/CDK7-mediated phosphorylation on Thr-161, and CDC25-mediated dephosphorylation of inhibitory phosphorylation on Thr-14 and Tyr-15. Activity is restricted during S-phase in an ATR-dependent manner to prevent premature entry into G2. Repressed by the CDK inhibitors CDKN1A/p21 and CDKN1B/p27 during the G1 phase and by CDKN1A/p21 at the G1-S checkpoint upon DNA damage. Transient activation by rapid and transient dephosphorylation at Tyr-15 triggered by TGFB1. Functionally, plays a key role in the control of the eukaryotic cell cycle by modulating the centrosome cycle as well as mitotic onset; promotes G2-M transition via association with multiple interphase cyclins. Phosphorylates PARVA/actopaxin, APC, AMPH, APC, BARD1, Bcl-xL/BCL2L1, BRCA2, CALD1, CASP8, CDC7, CDC20, CDC25A, CDC25C, CC2D1A, CENPA, CSNK2 proteins/CKII, FZR1/CDH1, CDK7, CEBPB, CHAMP1, DMD/dystrophin, EEF1 proteins/EF-1, EZH2, KIF11/EG5, EGFR, FANCG, FOS, GFAP, GOLGA2/GM130, GRASP1, UBE2A/hHR6A, HIST1H1 proteins/histone H1, HMGA1, HIVEP3/KRC, KAT5, LMNA, LMNB, LBR, MKI67, LATS1, MAP1B, MAP4, MARCKS, MCM2, MCM4, MKLP1, MLST8, MYB, NEFH, NFIC, NPC/nuclear pore complex, PITPNM1/NIR2, NPM1, NCL, NUCKS1, NPM1/numatrin, ORC1, PRKAR2A, EEF1E1/p18, EIF3F/p47, p53/TP53, NONO/p54NRB, PAPOLA, PLEC/plectin, RB1, TPPP, UL40/R2, RAB4A, RAP1GAP, RBBP8/CtIP, RCC1, RPS6KB1/S6K1, KHDRBS1/SAM68, ESPL1, SKI, BIRC5/survivin, STIP1, TEX14, beta-tubulins, MAPT/TAU, NEDD1, VIM/vimentin, TK1, FOXO1, RUNX1/AML1, SAMHD1, SIRT2, CGAS, ZAR1 and RUNX2. CDK1/CDC2-cyclin-B controls pronuclear union in interphase fertilized eggs. Essential for early stages of embryonic development. During G2 and early mitosis, CDC25A/B/C-mediated dephosphorylation activates CDK1/cyclin complexes which phosphorylate several substrates that trigger at least centrosome separation, Golgi dynamics, nuclear envelope breakdown and chromosome condensation. Once chromosomes are condensed and aligned at the metaphase plate, CDK1 activity is switched off by WEE1- and PKMYT1-mediated phosphorylation to allow sister chromatid separation, chromosome decondensation, reformation of the nuclear envelope and cytokinesis. Phosphorylates KRT5 during prometaphase and metaphase. Inactivated by PKR/EIF2AK2- and WEE1-mediated phosphorylation upon DNA damage to stop cell cycle and genome replication at the G2 checkpoint thus facilitating DNA repair. Reactivated after successful DNA repair through WIP1-dependent signaling leading to CDC25A/B/C-mediated dephosphorylation and restoring cell cycle progression. Catalyzes lamin (LMNA, LMNB1 and LMNB2) phosphorylation at the onset of mitosis, promoting nuclear envelope breakdown. In proliferating cells, CDK1-mediated FOXO1 phosphorylation at the G2-M phase represses FOXO1 interaction with 14-3-3 proteins and thereby promotes FOXO1 nuclear accumulation and transcription factor activity, leading to cell death of postmitotic neurons. The phosphorylation of beta-tubulins regulates microtubule dynamics during mitosis. NEDD1 phosphorylation promotes PLK1-mediated NEDD1 phosphorylation and subsequent targeting of the gamma-tubulin ring complex (gTuRC) to the centrosome, an important step for spindle formation. In addition, CC2D1A phosphorylation regulates CC2D1A spindle pole localization and association with SCC1/RAD21 and centriole cohesion during mitosis. The phosphorylation of Bcl-xL/BCL2L1 after prolongated G2 arrest upon DNA damage triggers apoptosis. In contrast, CASP8 phosphorylation during mitosis prevents its activation by proteolysis and subsequent apoptosis. This phosphorylation occurs in cancer cell lines, as well as in primary breast tissues and lymphocytes. EZH2 phosphorylation promotes H3K27me3 maintenance and epigenetic gene silencing. CALD1 phosphorylation promotes Schwann cell migration during peripheral nerve regeneration. CDK1-cyclin-B complex phosphorylates NCKAP5L and mediates its dissociation from centrosomes during mitosis. Regulates the amplitude of the cyclic expression of the core clock gene BMAL1 by phosphorylating its transcriptional repressor NR1D1, and this phosphorylation is necessary for SCF(FBXW7)-mediated ubiquitination and proteasomal degradation of NR1D1. Phosphorylates EML3 at 'Thr-881' which is essential for its interaction with HAUS augmin-like complex and TUBG1. Phosphorylates CGAS during mitosis, leading to its inhibition, thereby preventing CGAS activation by self DNA during mitosis. Phosphorylates SKA3 during mitosis which promotes SKA3 binding to the NDC80 complex and anchoring of the SKA complex to kinetochores, to enable stable attachment of mitotic spindle microtubules to kinetochores. The sequence is that of Cyclin-dependent kinase 1 (Cdk1) from Rattus norvegicus (Rat).